Here is a 292-residue protein sequence, read N- to C-terminus: MALIEGVGDEVTLLFGVVFLVLVLVLAWASTHTVEPPEHLLSPSPGASPSTETDSQEPLPPGNTDSSPGGVRDEDDKSEPGTEAGAAGQSADGSRAGGGDGGLLDDAGLGSDGLRHRESAGPSTHPPESTPSATQPSAEDAASDTHRNMVLRLKFLNDTERTAQVNPQDTIGYIKRTYFAGQEHQVRLIYQGQLLQDDSQTLASLNLADNSVLHCHISQHATRAMPAGARAADQVHVALNVGSLMVPLFVLMLSVLWYFQIQYRQFFTAPATASLVGITIFFSFVAFGVYRR.

The helical transmembrane segment at 11–31 (VTLLFGVVFLVLVLVLAWAST) threads the bilayer. The tract at residues 34 to 143 (VEPPEHLLSP…TQPSAEDAAS (110 aa)) is disordered. The span at 71-80 (VRDEDDKSEP) shows a compositional bias: basic and acidic residues. Over residues 84-94 (AGAAGQSADGS) the composition is skewed to low complexity. In terms of domain architecture, Ubiquitin-like spans 149–222 (MVLRLKFLND…LHCHISQHAT (74 aa)). A run of 2 helical transmembrane segments spans residues 237-257 (VALN…SVLW) and 269-289 (APAT…AFGV).

Its subcellular location is the membrane. The protein resides in the cytoplasm. It is found in the nucleus. Functionally, may contribute to the regulation of translation during cell-cycle progression. May contribute to the regulation of cell proliferation. The membrane form is involved in sterol-regulated ubiquitination and degradation of HMG-CoA reductase HMGCR. May be involved in centrosome assembly. The chain is Transmembrane and ubiquitin-like domain-containing protein 1 (tmub1) from Danio rerio (Zebrafish).